We begin with the raw amino-acid sequence, 466 residues long: Chromosomal replication initiator protein DnaA (466 aa).

The tract at residues 1–86 (MSLSLWQQCL…EVGTKPVTQT (86 aa)) is domain I, interacts with DnaA modulators. Residues 86-129 (TLKTPVHNVVAPTQTTTAQPQRVAPAARSGWDNVPAPAEPTYRS) are domain II. The interval 130 to 346 (NVNVKHTFDN…GALNRVIANA (217 aa)) is domain III, AAA+ region. Glycine 174, glycine 176, lysine 177, and threonine 178 together coordinate ATP. Positions 347-466 (NFTGRAITID…FSNLIRTLSS (120 aa)) are domain IV, binds dsDNA.

This sequence belongs to the DnaA family. Oligomerizes as a right-handed, spiral filament on DNA at oriC.

It localises to the cytoplasm. Plays an essential role in the initiation and regulation of chromosomal replication. ATP-DnaA binds to the origin of replication (oriC) to initiate formation of the DNA replication initiation complex once per cell cycle. Binds the DnaA box (a 9 base pair repeat at the origin) and separates the double-stranded (ds)DNA. Forms a right-handed helical filament on oriC DNA; dsDNA binds to the exterior of the filament while single-stranded (ss)DNA is stabiized in the filament's interior. The ATP-DnaA-oriC complex binds and stabilizes one strand of the AT-rich DNA unwinding element (DUE), permitting loading of DNA polymerase. After initiation quickly degrades to an ADP-DnaA complex that is not apt for DNA replication. Binds acidic phospholipids. This chain is Chromosomal replication initiator protein DnaA, found in Salmonella dublin (strain CT_02021853).